The following is a 343-amino-acid chain: Protein RecA (343 aa).

64 to 71 (GPESSGKT) is an ATP binding site.

This sequence belongs to the RecA family.

The protein resides in the cytoplasm. In terms of biological role, can catalyze the hydrolysis of ATP in the presence of single-stranded DNA, the ATP-dependent uptake of single-stranded DNA by duplex DNA, and the ATP-dependent hybridization of homologous single-stranded DNAs. It interacts with LexA causing its activation and leading to its autocatalytic cleavage. In Acidiphilium cryptum (strain JF-5), this protein is Protein RecA.